Reading from the N-terminus, the 222-residue chain is Triosephosphate isomerase (222 aa).

A substrate-binding site is contributed by 9-11; that stretch reads NLK. H93 serves as the catalytic Electrophile. The Proton acceptor role is filled by E141. Substrate is bound by residues I146, G181, and 202–203; that span reads AS.

Belongs to the triosephosphate isomerase family. As to quaternary structure, homotetramer; dimer of dimers.

It localises to the cytoplasm. It carries out the reaction D-glyceraldehyde 3-phosphate = dihydroxyacetone phosphate. It participates in carbohydrate biosynthesis; gluconeogenesis. The protein operates within carbohydrate degradation; glycolysis; D-glyceraldehyde 3-phosphate from glycerone phosphate: step 1/1. Involved in the gluconeogenesis. Catalyzes stereospecifically the conversion of dihydroxyacetone phosphate (DHAP) to D-glyceraldehyde-3-phosphate (G3P). In Methanoculleus marisnigri (strain ATCC 35101 / DSM 1498 / JR1), this protein is Triosephosphate isomerase.